Here is a 162-residue protein sequence, read N- to C-terminus: Phospholipase A2 (162 aa).

A signal peptide spans 1–22; sequence MKVLQMFFCVILLCVTSVLVEA. The propeptide occupies 23 to 35; that stretch reads KSTTKGDETASKR. Intrachain disulfides connect Cys-60-Cys-155, Cys-62-Cys-78, Cys-77-Cys-134, Cys-84-Cys-127, Cys-94-Cys-120, and Cys-113-Cys-125. 3 residues coordinate Ca(2+): Tyr-61, Gly-63, and Gly-65. Residue His-81 is part of the active site. Asp-82 is a Ca(2+) binding site. The active site involves Asp-128.

Belongs to the phospholipase A2 family. Group I subfamily. D49 sub-subfamily. Ca(2+) is required as a cofactor. In terms of tissue distribution, expressed both outside and in acontia, a specialised envenomation structure laden with batteries of venom-containing nematocysts found only in the superfamily Metridioidea.

The protein resides in the secreted. The protein localises to the nematocyst. The catalysed reaction is a 1,2-diacyl-sn-glycero-3-phosphocholine + H2O = a 1-acyl-sn-glycero-3-phosphocholine + a fatty acid + H(+). PLA2 catalyzes the calcium-dependent hydrolysis of the 2-acyl groups in 3-sn-phosphoglycerides. In Calliactis polypus (Hermit crab anemone), this protein is Phospholipase A2.